The primary structure comprises 567 residues: Thiol:disulfide interchange protein DsbD (567 aa).

Residues 1 to 19 (MAQRIFTLILLLCSTSAFA) form the signal peptide. 2 disulfide bridges follow: Cys-122/Cys-128 and Cys-185/Cys-307. 7 consecutive transmembrane segments (helical) span residues 170–192 (ALWA…MYPL), 212–234 (LAFI…VAAA), 246–268 (YVLI…LFTL), 297–319 (GAIA…LLYI), 326–348 (WLGG…LVTV), 358–380 (GPWM…VFLL), and 387–409 (AWGL…ITSL). Positions 435 to 567 (QDWAFGSPSA…FSAHLHDRQP (133 aa)) constitute a Thioredoxin domain. A disulfide bridge links Cys-482 with Cys-485.

The protein belongs to the thioredoxin family. DsbD subfamily.

It is found in the cell inner membrane. It catalyses the reaction [protein]-dithiol + NAD(+) = [protein]-disulfide + NADH + H(+). The catalysed reaction is [protein]-dithiol + NADP(+) = [protein]-disulfide + NADPH + H(+). Functionally, required to facilitate the formation of correct disulfide bonds in some periplasmic proteins and for the assembly of the periplasmic c-type cytochromes. Acts by transferring electrons from cytoplasmic thioredoxin to the periplasm. This transfer involves a cascade of disulfide bond formation and reduction steps. This Salmonella typhi protein is Thiol:disulfide interchange protein DsbD.